The sequence spans 691 residues: Elongation factor G (691 aa).

The region spanning 8–283 is the tr-type G domain; the sequence is EDYRNFGIMA…AVVDYLPTPI (276 aa). Residues 17 to 24, 81 to 85, and 135 to 138 each bind GTP; these read AHIDAGKT, DTPGH, and NKMD.

Belongs to the TRAFAC class translation factor GTPase superfamily. Classic translation factor GTPase family. EF-G/EF-2 subfamily.

The protein localises to the cytoplasm. Its function is as follows. Catalyzes the GTP-dependent ribosomal translocation step during translation elongation. During this step, the ribosome changes from the pre-translocational (PRE) to the post-translocational (POST) state as the newly formed A-site-bound peptidyl-tRNA and P-site-bound deacylated tRNA move to the P and E sites, respectively. Catalyzes the coordinated movement of the two tRNA molecules, the mRNA and conformational changes in the ribosome. The sequence is that of Elongation factor G from Beijerinckia indica subsp. indica (strain ATCC 9039 / DSM 1715 / NCIMB 8712).